The primary structure comprises 256 residues: Ubiquinone/menaquinone biosynthesis C-methyltransferase UbiE (256 aa).

Polar residues predominate over residues Met1–Gly19. The interval Met1–Pro24 is disordered. S-adenosyl-L-methionine-binding positions include Thr81, Asp102, and Asp128–Ala129.

The protein belongs to the class I-like SAM-binding methyltransferase superfamily. MenG/UbiE family.

The enzyme catalyses a 2-demethylmenaquinol + S-adenosyl-L-methionine = a menaquinol + S-adenosyl-L-homocysteine + H(+). It catalyses the reaction a 2-methoxy-6-(all-trans-polyprenyl)benzene-1,4-diol + S-adenosyl-L-methionine = a 5-methoxy-2-methyl-3-(all-trans-polyprenyl)benzene-1,4-diol + S-adenosyl-L-homocysteine + H(+). The protein operates within quinol/quinone metabolism; menaquinone biosynthesis; menaquinol from 1,4-dihydroxy-2-naphthoate: step 2/2. It participates in cofactor biosynthesis; ubiquinone biosynthesis. In terms of biological role, methyltransferase required for the conversion of demethylmenaquinol (DMKH2) to menaquinol (MKH2) and the conversion of 2-polyprenyl-6-methoxy-1,4-benzoquinol (DDMQH2) to 2-polyprenyl-3-methyl-6-methoxy-1,4-benzoquinol (DMQH2). The polypeptide is Ubiquinone/menaquinone biosynthesis C-methyltransferase UbiE (Bordetella avium (strain 197N)).